A 639-amino-acid chain; its full sequence is Methyl-accepting chemotaxis protein McpS (639 aa).

Topologically, residues 1 to 13 (MNSWFANISVNLK) are cytoplasmic. A helical membrane pass occupies residues 14-34 (LGLGFGLVLVLTGLLALTGWT). Residues 35–288 (SLGSLIDRSN…RDIESTQARS (254 aa)) lie on the Periplasmic side of the membrane. One can recognise an HBM domain in the interval 41-283 (DRSNWMGDIG…IQLERRDIES (243 aa)). 60-65 (RIARLQ) contacts (S)-malate. 60 to 65 (RIARLQ) contributes to the succinate binding site. Residues Asp138, Arg183, Arg187, and Tyr236 each contribute to the acetate site. A coiled-coil region spans residues 191-245 (AENSSANEQAALRQLDAALADTDNLKRQLPSEDARLQQFENAVLAYRDAVRQFRD). Positions 254 and 258 each coordinate (S)-malate. Residue Arg254 participates in succinate binding. A helical membrane pass occupies residues 289-309 (LQAIATLLALLVGVLAAVLIT). An HAMP domain is found at 310-362 (RQITRPLQDTLVAVEKIASGDLTQHMRVTRRDELGVLQQGIARMGTTLRELIS). Over 310–639 (RQITRPLQDT…LQTLVSQFRV (330 aa)) the chain is Cytoplasmic. In terms of domain architecture, Methyl-accepting transducer spans 367 to 603 (GVTQIASAAE…EISRSILNVR (237 aa)).

Belongs to the methyl-accepting chemotaxis (MCP) protein family. In terms of assembly, homodimer. Exists as a mixture of monomers and dimers in solution. Ligand binding stabilizes the dimeric form. Methylated by CheR2.

The protein resides in the cell membrane. Its activity is regulated as follows. Binding of citrate to the ligand-binding domain reduces the chemotaxis towards the strong attractants such as malate and succinate. However, in physiologically relevant niches, citrate is mostly complexed with magnesium or calcium ions, and does not bind McpS. In terms of biological role, chemotactic-signal transducers respond to changes in the concentration of attractants and repellents in the environment, transduce a signal from the outside to the inside of the cell, and facilitate sensory adaptation through the variation of the level of methylation. McpS is a specific chemoreceptor for 6 tricarboxylic acid (TCA) cycle intermediates (succinate, fumarate, malate, oxaloacetate, citrate and isocitrate), butyrate and acetate. Malate, succinate, fumarate and oxaloacetate cause the strongest chemotactic response. This Pseudomonas putida (strain ATCC 47054 / DSM 6125 / CFBP 8728 / NCIMB 11950 / KT2440) protein is Methyl-accepting chemotaxis protein McpS (mcpS).